Here is a 200-residue protein sequence, read N- to C-terminus: Casparian strip membrane protein 1 (200 aa).

Residues 1 to 38 (MSTTIEIPAESSAVAKGKAPLIGASSSSYEKKGGYKKG) are Cytoplasmic-facing. The chain crosses the membrane as a helical span at residues 39-59 (IAIFDFILRLGAVISALSAAA). The Extracellular portion of the chain corresponds to 60 to 88 (TMGTSDETLPFFTQFFQFEAGYDDFPTFQ). A helical transmembrane segment spans residues 89-109 (FFVIAMGFVGGYLVLSLPFSV). Topologically, residues 110 to 121 (VAIIRPHAVGIR) are cytoplasmic. A helical transmembrane segment spans residues 122-142 (LLLLILDTVALTLNTAAAAAA). At 143–175 (AAIVYLAHNGNQSANWLAVCQQFGDFCQKVSGG) the chain is on the extracellular side. A glycan (N-linked (GlcNAc...) asparagine) is linked at Asn153. The helical transmembrane segment at 176–196 (VVASFVSVLVFLLLVVMSAVA) threads the bilayer. Topologically, residues 197-200 (LRKH) are cytoplasmic.

It belongs to the Casparian strip membrane proteins (CASP) family. As to quaternary structure, homodimer and heterodimers.

The protein resides in the cell membrane. Functionally, regulates membrane-cell wall junctions and localized cell wall deposition. Required for establishment of the Casparian strip membrane domain (CSD) and the subsequent formation of Casparian strips, a cell wall modification of the root endodermis that determines an apoplastic barrier between the intraorganismal apoplasm and the extraorganismal apoplasm and prevents lateral diffusion. In Ricinus communis (Castor bean), this protein is Casparian strip membrane protein 1.